Here is a 269-residue protein sequence, read N- to C-terminus: 5'-nucleotidase SurE (269 aa).

A divalent metal cation contacts are provided by aspartate 11, aspartate 12, serine 43, and asparagine 101.

It belongs to the SurE nucleotidase family. The cofactor is a divalent metal cation.

The protein resides in the cytoplasm. The enzyme catalyses a ribonucleoside 5'-phosphate + H2O = a ribonucleoside + phosphate. In terms of biological role, nucleotidase that shows phosphatase activity on nucleoside 5'-monophosphates. The protein is 5'-nucleotidase SurE of Prochlorococcus marinus (strain MIT 9301).